Here is a 156-residue protein sequence, read N- to C-terminus: SCP2 sterol-binding domain-containing protein 1 (156 aa).

Residues 44 to 156 enclose the SCP2 domain; sequence SFPVFQDIRL…ERVFKDWAKF (113 aa).

The chain is SCP2 sterol-binding domain-containing protein 1 (SCP2D1) from Homo sapiens (Human).